Consider the following 92-residue polypeptide: Small ribosomal subunit protein uS19 (92 aa).

Belongs to the universal ribosomal protein uS19 family.

Functionally, protein S19 forms a complex with S13 that binds strongly to the 16S ribosomal RNA. In Caulobacter sp. (strain K31), this protein is Small ribosomal subunit protein uS19.